The sequence spans 271 residues: Protein-L-isoaspartate O-methyltransferase (271 aa).

Residues 1–15 are compositionally biased toward pro residues; it reads MRKPVTPPGNPPRPR. Positions 1-60 are disordered; that stretch reads MRKPVTPPGNPPRPRSPGYGSTSLAPGITAANSNTRISPPTLARPAPAAGAGGQGGNLGL. Positions 39–49 are enriched in low complexity; sequence PPTLARPAPAA. Serine 119 is a catalytic residue.

It belongs to the methyltransferase superfamily. L-isoaspartyl/D-aspartyl protein methyltransferase family.

The protein localises to the cytoplasm. It carries out the reaction [protein]-L-isoaspartate + S-adenosyl-L-methionine = [protein]-L-isoaspartate alpha-methyl ester + S-adenosyl-L-homocysteine. Catalyzes the methyl esterification of L-isoaspartyl residues in peptides and proteins that result from spontaneous decomposition of normal L-aspartyl and L-asparaginyl residues. It plays a role in the repair and/or degradation of damaged proteins. The polypeptide is Protein-L-isoaspartate O-methyltransferase (Bordetella petrii (strain ATCC BAA-461 / DSM 12804 / CCUG 43448)).